The sequence spans 130 residues: MAKQIRKIGVRKTKRKIPKGVVHVQATFNNTIVTITDVRGEVLSWSSAGACGFKGTKKGTPFAAQTAAENAVRQVIDQGMKQAEIMISGPGSGRETAIRAIQAAGLGITLIRDVTPIPHNGCRPPKKRRV.

It belongs to the universal ribosomal protein uS11 family. Part of the 30S ribosomal subunit.

Its subcellular location is the plastid. The protein localises to the chloroplast. This chain is Small ribosomal subunit protein uS11c, found in Mesostigma viride (Green alga).